Reading from the N-terminus, the 108-residue chain is DNA-binding protein HBbu (108 aa).

The protein belongs to the bacterial histone-like protein family.

Its function is as follows. Histone-like DNA-binding protein which is capable of wrapping DNA to stabilize it, and thus to prevent its denaturation under extreme environmental conditions. This is DNA-binding protein HBbu (hbb) from Borrelia garinii subsp. bavariensis (strain ATCC BAA-2496 / DSM 23469 / PBi) (Borreliella bavariensis).